The following is a 416-amino-acid chain: Gamma-glutamyl phosphate reductase (416 aa).

The protein belongs to the gamma-glutamyl phosphate reductase family.

It is found in the cytoplasm. The catalysed reaction is L-glutamate 5-semialdehyde + phosphate + NADP(+) = L-glutamyl 5-phosphate + NADPH + H(+). It functions in the pathway amino-acid biosynthesis; L-proline biosynthesis; L-glutamate 5-semialdehyde from L-glutamate: step 2/2. Catalyzes the NADPH-dependent reduction of L-glutamate 5-phosphate into L-glutamate 5-semialdehyde and phosphate. The product spontaneously undergoes cyclization to form 1-pyrroline-5-carboxylate. In Vibrio parahaemolyticus serotype O3:K6 (strain RIMD 2210633), this protein is Gamma-glutamyl phosphate reductase.